A 955-amino-acid chain; its full sequence is MPLIMEDGINVDDLFGEPGSLELGLSPSTTSPRGLAQRLDEMRLIGCCQKIAWSKLGCIAYISQDGLRVNVRHLQCRPSDGKWVLSEETPLLPVTDAHGGHTLVHLCWNEPGVELAVADSSGRVSIYSISIALNSIAGHRQAAFDPDDDGAQIVGMMWLNTQRTVHSFYQAAKVQGRWAYSPFRRRPIGPFHPVNKAGLVCVTRSGIIRLLYQNPDGRWAEISAELKNTGYSDRLLTHAALVSTQGGILIATHSACQKLCLYRVHIAWTPTQYDPGQQKPPVPWPVPSFRFLHCKVESQCDVRGTNRHAGDNAPGLPSFTNSLYCLTGLDIVLPALDNPAGSTANPWVVAIYSAPLHVTQDHPQQQGPASVFVRWQLDTGPLTLHPKFDDVPSKKNNAQVKPKLELRRLDDVYSDKYAISIDQIEYGNVLAITYDDGSVVFYDPKTMAVVNGVDDANTVTSLAQAGFHHPPEPSGLHISFSPNACAAVMLDGEGQTHLRLTEHSYGAEGGLHDENKYSAAIAALTLAFCRGCGSDVNTDDILLILVRQLTPEAQATFINEAYRALPINCNFTVEQDKLMNHPYIPRCLSIQAALGFKNKYTPRSFASSIPWAVLQLRHASVLYAFFFQYNKGGTTEPHDPDVLRMVLGNTKWALDFSFYVLNELFDLADDFESLSGDQEAFTQKLKSTSSLPLIILLSSMSRAFLRFICRGLRGIYAGYATAAPLSGDARVYYAEIYQTLESAPIRIDAYEKFLAGVDSAVRHAYHGAGFGDAERPGPEKELLVNARVPPVLVPAVSTILRQTVPALKTEIDRITIYMGDYSWLGLSNDRRTEMYRRSRDVDIIKKIPCRPTASALPETNANANANQNGKSSTQVQQRRRRCVRCCEVSSDTHPPRSLLSFRMIVKLGLLRACVCGGMWTLEPSVYSSAQPSGAPVGQATGRTPALVAAGLAGSS.

The disordered stretch occupies residues 855 to 874 (ALPETNANANANQNGKSSTQ). Positions 857–873 (PETNANANANQNGKSST) are enriched in polar residues.

It belongs to the Mediator complex subunit 16 family. In terms of assembly, component of the Mediator complex.

It localises to the nucleus. Its function is as follows. Component of the Mediator complex, a coactivator involved in the regulated transcription of nearly all RNA polymerase II-dependent genes. Mediator functions as a bridge to convey information from gene-specific regulatory proteins to the basal RNA polymerase II transcription machinery. Mediator is recruited to promoters by direct interactions with regulatory proteins and serves as a scaffold for the assembly of a functional preinitiation complex with RNA polymerase II and the general transcription factors. The protein is Mediator of RNA polymerase II transcription subunit 16 (sin4) of Aspergillus fumigatus (strain ATCC MYA-4609 / CBS 101355 / FGSC A1100 / Af293) (Neosartorya fumigata).